The primary structure comprises 351 residues: Cysteine-rich receptor-like protein kinase 45 (351 aa).

Positions 37–287 (NDFSELVGRG…EILRYIHIAL (251 aa)) constitute a Protein kinase domain. ATP contacts are provided by residues 43–51 (VGRGGFGFV) and Lys65. At Tyr110 the chain carries Phosphotyrosine. Asp162 serves as the catalytic Proton acceptor. A phosphothreonine mark is found at Thr197 and Thr202. A Phosphotyrosine modification is found at Tyr210.

Belongs to the protein kinase superfamily. Ser/Thr protein kinase family. CRK subfamily. As to quaternary structure, interacts with CRK36. Post-translationally, autophosphorylated and phosphorylated by CRK36.

It localises to the cytoplasm. The protein resides in the cytosol. It catalyses the reaction L-seryl-[protein] + ATP = O-phospho-L-seryl-[protein] + ADP + H(+). It carries out the reaction L-threonyl-[protein] + ATP = O-phospho-L-threonyl-[protein] + ADP + H(+). Forms a complex with CRK36 that may negatively control abscisic acid (ABA) and osmotic stress signal transduction. Involved in plant response to ABA during seed germination, early seedling growth and responses to abiotic stresses by inducing the expression of ABA-responsive genes and stress-inducible genes. Acts as a positive regulator in disease resistance, downstream of NPR1 and WRKY70. This Arabidopsis thaliana (Mouse-ear cress) protein is Cysteine-rich receptor-like protein kinase 45.